The primary structure comprises 450 residues: tRNA-2-methylthio-N(6)-dimethylallyladenosine synthase (450 aa).

Residues 7–127 (KRLYIKTYGC…LPELIARAHR (121 aa)) enclose the MTTase N-terminal domain. [4Fe-4S] cluster-binding residues include C16, C52, C90, C165, C169, and C172. The Radical SAM core domain maps to 151–378 (QVSGVSAFLT…NQLLDEQQKA (228 aa)). Positions 381–443 (ILQVGKTMPV…KMSLGGVLET (63 aa)) constitute a TRAM domain.

This sequence belongs to the methylthiotransferase family. MiaB subfamily. In terms of assembly, monomer. [4Fe-4S] cluster serves as cofactor.

It is found in the cytoplasm. The catalysed reaction is N(6)-dimethylallyladenosine(37) in tRNA + (sulfur carrier)-SH + AH2 + 2 S-adenosyl-L-methionine = 2-methylsulfanyl-N(6)-dimethylallyladenosine(37) in tRNA + (sulfur carrier)-H + 5'-deoxyadenosine + L-methionine + A + S-adenosyl-L-homocysteine + 2 H(+). Its function is as follows. Catalyzes the methylthiolation of N6-(dimethylallyl)adenosine (i(6)A), leading to the formation of 2-methylthio-N6-(dimethylallyl)adenosine (ms(2)i(6)A) at position 37 in tRNAs that read codons beginning with uridine. The protein is tRNA-2-methylthio-N(6)-dimethylallyladenosine synthase of Caulobacter sp. (strain K31).